Here is a 216-residue protein sequence, read N- to C-terminus: Small ribosomal subunit protein uS3 (216 aa).

In terms of domain architecture, KH type-2 spans L38–R106.

It belongs to the universal ribosomal protein uS3 family. Part of the 30S ribosomal subunit. Forms a tight complex with proteins S10 and S14.

Binds the lower part of the 30S subunit head. Binds mRNA in the 70S ribosome, positioning it for translation. The polypeptide is Small ribosomal subunit protein uS3 (Thermodesulfovibrio yellowstonii (strain ATCC 51303 / DSM 11347 / YP87)).